Here is a 216-residue protein sequence, read N- to C-terminus: Octanoyltransferase (216 aa).

Residues 32-207 form the BPL/LPL catalytic domain; sequence PDSQDEIWLV…QLVKHLDYAE (176 aa). Substrate contacts are provided by residues 71-78, 138-140, and 151-153; these read RGGQVTYH, SLG, and GLA. Residue C169 is the Acyl-thioester intermediate of the active site.

The protein belongs to the LipB family.

The protein resides in the cytoplasm. It carries out the reaction octanoyl-[ACP] + L-lysyl-[protein] = N(6)-octanoyl-L-lysyl-[protein] + holo-[ACP] + H(+). It participates in protein modification; protein lipoylation via endogenous pathway; protein N(6)-(lipoyl)lysine from octanoyl-[acyl-carrier-protein]: step 1/2. Functionally, catalyzes the transfer of endogenously produced octanoic acid from octanoyl-acyl-carrier-protein onto the lipoyl domains of lipoate-dependent enzymes. Lipoyl-ACP can also act as a substrate although octanoyl-ACP is likely to be the physiological substrate. This chain is Octanoyltransferase, found in Pseudomonas putida (strain ATCC 47054 / DSM 6125 / CFBP 8728 / NCIMB 11950 / KT2440).